The primary structure comprises 974 residues: MAKAGSAGGPSPGGGAPWHLRNVLSDSVESSDDEFFDAREEVAEGKNAILIGMSQWSSNDLVEQIETIGKLDERQGDGATACTSSILQEKQRELYRVSLRRQRFPAQGSIEIHEDGEEGCSQRSCKTHVLLLVLHGGNVLDTGSGDPSCKAADIHTFSSVLEKVMRAHFPAALGHILIKFVPCPAICSEAFSLVSNLNPYSHDEGCLGTSQDHVPLAALPLLAISSPQYQDAVATVIERANHIYGEFLKSSDGIGFNGQVCLIGDCVGGLLAFDAICYSAGPSGDSPGSSSRKGSISSTQDTPVVVEEDCSLASSKRLSKSNVDVSSGVEDEDPKRPLPRKQSDSSTYDCEAITQHHAFLSSIHSSVLKDEAEAPAAGTPQLSEVSLGRFDFDVSDFFLFGSPLGLVLAMRRTVLPGIDGFQMRPACSQVYSFFHCADPSASRLEPLLEPKFHLVPPVSVPRYQRFPLGDGQSLLLADALHTHSPLFLEGSSRGSPPLLDAPASPPQAPRFQRTERRLSKGSSHSDSSESSDSLAPMGASRITAKWWGTKRIDYALYCPDVLTAFPTVALPHLFHASYWESTDVVAFILRQVMRYESASVKESTGLDPTALSPANPREKWLRKRTQVKLRNVTANHRANDVIAAEDGPQVLVGRFMYGPLDMVALTGEKVDILVMTEPSSGRWVHLDTEITNNSGRITYNVPRPRRLGVGVYPVKMVVRGDQTCAMSYLTVLPRGMECVVFSIDGSFAASVSIMGSDPKVRPGAVDVVRHWQDLGYMILYITGRPDMQKQRVVSWLSQHNFPQGMIFFSDGLVHDPLRQKAIFLRNLMQECFIKITAAYGSTKDISVYSVLGLPASQIFIVGRSTKKYQTQCQFLSEGYAAHLAALEASHRSRPKKNNSRMILRKGSFGLHAQPEFLRKRNHLRRTMSVQQPDPPAANPKPERAQSQPESDKDHERPLPALSWARGPPKFESVP.

Phosphoserine is present on residues Ser30, Ser31, Ser109, Ser295, Ser298, Ser321, Ser343, and Ser495. The disordered stretch occupies residues 310 to 347; it reads CSLASSKRLSKSNVDVSSGVEDEDPKRPLPRKQSDSST. Polar residues predominate over residues 312-325; it reads LASSKRLSKSNVDV. Residues 390 to 594 form the DDHD domain; that stretch reads FDFDVSDFFL…VAFILRQVMR (205 aa). The segment at 497–535 is disordered; the sequence is PLLDAPASPPQAPRFQRTERRLSKGSSHSDSSESSDSLA. Residues 520 to 533 are compositionally biased toward low complexity; it reads KGSSHSDSSESSDS. Phosphoserine is present on residues Ser612, Ser907, Ser928, and Ser946. The interval 927-974 is disordered; the sequence is MSVQQPDPPAANPKPERAQSQPESDKDHERPLPALSWARGPPKFESVP.

Belongs to the PtdIns transfer protein family. PI transfer class IIA subfamily. Interacts with PTK2B via its C-terminus.

The protein localises to the endomembrane system. Functionally, catalyzes the transfer of phosphatidylinositol and phosphatidylcholine between membranes (in vitro). Binds calcium ions. This is Membrane-associated phosphatidylinositol transfer protein 3 (Pitpnm3) from Mus musculus (Mouse).